Reading from the N-terminus, the 294-residue chain is Tryptophan 2,3-dioxygenase 1 (294 aa).

The tract at residues 1-20 is disordered; it reads MSEPIQPTRPAASGCPMHGA. Residues 63–67, Tyr-125, and Arg-129 contribute to the substrate site; that span reads FIVQH. His-252 lines the heme pocket. Substrate is bound at residue Thr-266.

This sequence belongs to the tryptophan 2,3-dioxygenase family. As to quaternary structure, homotetramer. The cofactor is heme.

It catalyses the reaction L-tryptophan + O2 = N-formyl-L-kynurenine. It functions in the pathway amino-acid degradation; L-tryptophan degradation via kynurenine pathway; L-kynurenine from L-tryptophan: step 1/2. In terms of biological role, heme-dependent dioxygenase that catalyzes the oxidative cleavage of the L-tryptophan (L-Trp) pyrrole ring and converts L-tryptophan to N-formyl-L-kynurenine. Catalyzes the oxidative cleavage of the indole moiety. In Ralstonia nicotianae (strain ATCC BAA-1114 / GMI1000) (Ralstonia solanacearum), this protein is Tryptophan 2,3-dioxygenase 1.